We begin with the raw amino-acid sequence, 217 residues long: MFVVKTAVLLFFALFIGNTYAYTYSLDRIQALKFSSESSNVDDGPRLHCKGPACSSHSNDLAICQHNQLNVAPHLLKWTCVWPNQSSHVEVIDYNIECKKTVALSMDSITKTCILNYKLEWTYSGVLLHRPWKLFSLKPFTAAFVLLLAASYLATACFRMLGYLGTPRSRFHDNRRWNEQKFMELAVSAVEEQLSNGIQLFSNVKQRVPVPVLDESV.

A signal peptide spans 1–21; sequence MFVVKTAVLLFFALFIGNTYA. The Extracellular portion of the chain corresponds to 22–133; that stretch reads YTYSLDRIQA…SGVLLHRPWK (112 aa). Residue asparagine 84 is glycosylated (N-linked (GlcNAc...) asparagine). A helical transmembrane segment spans residues 134–154; it reads LFSLKPFTAAFVLLLAASYLA. At 155–217 the chain is on the cytoplasmic side; the sequence is TACFRMLGYL…VPVPVLDESV (63 aa).

The protein localises to the membrane. This chain is Meiotic expression up-regulated protein 29 (meu29), found in Schizosaccharomyces pombe (strain 972 / ATCC 24843) (Fission yeast).